A 319-amino-acid chain; its full sequence is GTP 3',8-cyclase (319 aa).

The region spanning 4 to 227 (KHGRKINYLR…VETEKSSTAL (224 aa)) is the Radical SAM core domain. R13 is a binding site for GTP. The [4Fe-4S] cluster site is built by C20 and C24. S-adenosyl-L-methionine is bound at residue Y26. C27 serves as a coordination point for [4Fe-4S] cluster. Position 63 (R63) interacts with GTP. G67 provides a ligand contact to S-adenosyl-L-methionine. Position 94 (T94) interacts with GTP. S118 is a binding site for S-adenosyl-L-methionine. K155 is a GTP binding site. M189 serves as a coordination point for S-adenosyl-L-methionine. The [4Fe-4S] cluster site is built by C249 and C252. Residue 254-256 (RVR) coordinates GTP. C266 provides a ligand contact to [4Fe-4S] cluster.

This sequence belongs to the radical SAM superfamily. MoaA family. In terms of assembly, monomer and homodimer. It depends on [4Fe-4S] cluster as a cofactor.

The catalysed reaction is GTP + AH2 + S-adenosyl-L-methionine = (8S)-3',8-cyclo-7,8-dihydroguanosine 5'-triphosphate + 5'-deoxyadenosine + L-methionine + A + H(+). It functions in the pathway cofactor biosynthesis; molybdopterin biosynthesis. Catalyzes the cyclization of GTP to (8S)-3',8-cyclo-7,8-dihydroguanosine 5'-triphosphate. In Clostridium botulinum (strain ATCC 19397 / Type A), this protein is GTP 3',8-cyclase.